The primary structure comprises 873 residues: Protein translocase subunit SecA (873 aa).

Residues glutamine 88, 106-110, and aspartate 501 contribute to the ATP site; that span reads GEGKT. Zn(2+) is bound by residues cysteine 856, cysteine 858, cysteine 867, and histidine 868.

It belongs to the SecA family. Monomer and homodimer. Part of the essential Sec protein translocation apparatus which comprises SecA, SecYEG and auxiliary proteins SecDF-YajC and YidC. The cofactor is Zn(2+).

It is found in the cell inner membrane. It localises to the cytoplasm. The enzyme catalyses ATP + H2O + cellular proteinSide 1 = ADP + phosphate + cellular proteinSide 2.. Part of the Sec protein translocase complex. Interacts with the SecYEG preprotein conducting channel. Has a central role in coupling the hydrolysis of ATP to the transfer of proteins into and across the cell membrane, serving both as a receptor for the preprotein-SecB complex and as an ATP-driven molecular motor driving the stepwise translocation of polypeptide chains across the membrane. The polypeptide is Protein translocase subunit SecA (Anaplasma phagocytophilum (strain HZ)).